The sequence spans 428 residues: Bifunctional protein GlmU (428 aa).

Residues 1–221 (MDIVILAAGC…ERKAMGINTR (221 aa)) form a pyrophosphorylase region. UDP-N-acetyl-alpha-D-glucosamine contacts are provided by residues 6–9 (LAAG), Lys-20, Gln-74, 79–80 (GT), 103–105 (YGD), Gly-140, and Asn-219. Asp-105 serves as a coordination point for Mg(2+). Asn-219 is a binding site for Mg(2+). The linker stretch occupies residues 222–242 (ADLAIAESYFQCMKRASFLQS). The segment at 243–428 (GVTLTSPDQV…TTKPEYKTRR (186 aa)) is N-acetyltransferase. The UDP-N-acetyl-alpha-D-glucosamine site is built by Arg-308 and Lys-326. The active-site Proton acceptor is the His-338. UDP-N-acetyl-alpha-D-glucosamine contacts are provided by Tyr-341 and Asn-352. Residues Ala-355, 361-362 (NY), Ala-398, and Arg-415 each bind acetyl-CoA.

It in the N-terminal section; belongs to the N-acetylglucosamine-1-phosphate uridyltransferase family. The protein in the C-terminal section; belongs to the transferase hexapeptide repeat family. As to quaternary structure, homotrimer. Mg(2+) serves as cofactor.

The protein localises to the cytoplasm. It carries out the reaction alpha-D-glucosamine 1-phosphate + acetyl-CoA = N-acetyl-alpha-D-glucosamine 1-phosphate + CoA + H(+). It catalyses the reaction N-acetyl-alpha-D-glucosamine 1-phosphate + UTP + H(+) = UDP-N-acetyl-alpha-D-glucosamine + diphosphate. It functions in the pathway nucleotide-sugar biosynthesis; UDP-N-acetyl-alpha-D-glucosamine biosynthesis; N-acetyl-alpha-D-glucosamine 1-phosphate from alpha-D-glucosamine 6-phosphate (route II): step 2/2. It participates in nucleotide-sugar biosynthesis; UDP-N-acetyl-alpha-D-glucosamine biosynthesis; UDP-N-acetyl-alpha-D-glucosamine from N-acetyl-alpha-D-glucosamine 1-phosphate: step 1/1. The protein operates within bacterial outer membrane biogenesis; LPS lipid A biosynthesis. Its function is as follows. Catalyzes the last two sequential reactions in the de novo biosynthetic pathway for UDP-N-acetylglucosamine (UDP-GlcNAc). The C-terminal domain catalyzes the transfer of acetyl group from acetyl coenzyme A to glucosamine-1-phosphate (GlcN-1-P) to produce N-acetylglucosamine-1-phosphate (GlcNAc-1-P), which is converted into UDP-GlcNAc by the transfer of uridine 5-monophosphate (from uridine 5-triphosphate), a reaction catalyzed by the N-terminal domain. This is Bifunctional protein GlmU from Anaplasma marginale (strain Florida).